The primary structure comprises 287 residues: Spermidine/putrescine transport system permease protein PotB (287 aa).

The Cytoplasmic portion of the chain corresponds to 1–10; the sequence is MKNTSKFQNV. A helical transmembrane segment spans residues 11-31; it reads VIVTIVGWLVLFVFLPNLMII. The Periplasmic portion of the chain corresponds to 32 to 70; sequence GTSFLTRDDASFVKMVFTLDNYARLLDPLYFEVLLHSLN. The region spanning 65–271 is the ABC transmembrane type-1 domain; the sequence is LLHSLNMALI…IVMGLMLLIY (207 aa). The chain crosses the membrane as a helical span at residues 71 to 91; the sequence is MALIATLSCLVLGYPFAWFLA. Residues 92–99 lie on the Cytoplasmic side of the membrane; it reads KLPEKIRP. Residues 100–120 traverse the membrane as a helical segment; that stretch reads LLLFLLIVPFWTNSLIRIYGL. The Periplasmic portion of the chain corresponds to 121 to 145; the sequence is KIFLSTKGYLNEFLLWLGVIDTPIR. Residues 146–166 traverse the membrane as a helical segment; sequence IMFTPSAVIIGLVYILLPFMV. Over 167–197 the chain is Cytoplasmic; that stretch reads MPLYSSIEKLDKPLLEAARDLGASKMQTFIR. Residues 198-218 form a helical membrane-spanning segment; that stretch reads IIIPLTMPGIVAGCLLVMLPA. The Periplasmic segment spans residues 219 to 251; the sequence is MGLFYVSDLMGGAKNLLIGNVIKVQFLNIRDWP. A helical transmembrane segment spans residues 252 to 272; sequence FGAATSITLTIVMGLMLLIYW. Residues 273-287 lie on the Cytoplasmic side of the membrane; that stretch reads RASRLLNKKVSDISD.

The protein belongs to the binding-protein-dependent transport system permease family. CysTW subfamily.

It localises to the cell inner membrane. In terms of biological role, required for the activity of the bacterial periplasmic transport system of putrescine and spermidine. This is Spermidine/putrescine transport system permease protein PotB (potB) from Salmonella typhi.